The chain runs to 151 residues: Large ribosomal subunit protein bL9 (151 aa).

Belongs to the bacterial ribosomal protein bL9 family.

Its function is as follows. Binds to the 23S rRNA. This is Large ribosomal subunit protein bL9 from Kosmotoga olearia (strain ATCC BAA-1733 / DSM 21960 / TBF 19.5.1).